Reading from the N-terminus, the 183-residue chain is Non-classical export protein 2 homolog (183 aa).

Over 1 to 8 (MVGIRQYG) the chain is Cytoplasmic. The helical transmembrane segment at 9–29 (VFTWVFRTFQLAIDTIVLALA) threads the bilayer. Topologically, residues 30–44 (SALVNQQTSGGSPGK) are extracellular. Residues 45 to 65 (INFSVAVGSFAILTFFLTAVG) form a helical membrane-spanning segment. The Cytoplasmic portion of the chain corresponds to 66–75 (RFLPTILGNP). The chain crosses the membrane as a helical span at residues 76–96 (WLIAFYDFVNWVFALTGGCCI). Over 97–131 (AVAIRVHACDNQKYLDRNHYTQGSMRRCQELKALC) the chain is Extracellular. Residues 132–152 (FFLWFMFGLYVASFIVQIFIA) form a helical membrane-spanning segment. The Cytoplasmic segment spans residues 153–183 (KNDTPNYTFRGRGRGKGSGPAVAPRPVMSAV). Residues 163 to 183 (GRGRGKGSGPAVAPRPVMSAV) are disordered.

The protein belongs to the NCE102 family.

It is found in the cytoplasm. The protein resides in the golgi apparatus membrane. It localises to the cell membrane. Its function is as follows. Involved in membrane organization and might act as a sensor of sphingolipids that regulates plasma membrane function. Involved in a novel pathway of export of proteins that lack a cleavable signal sequence. In Schizosaccharomyces pombe (strain 972 / ATCC 24843) (Fission yeast), this protein is Non-classical export protein 2 homolog (fhn1).